Consider the following 258-residue polypeptide: Tryptophan synthase alpha chain (258 aa).

Catalysis depends on proton acceptor residues Glu52 and Asp63.

It belongs to the TrpA family. Tetramer of two alpha and two beta chains.

The enzyme catalyses (1S,2R)-1-C-(indol-3-yl)glycerol 3-phosphate + L-serine = D-glyceraldehyde 3-phosphate + L-tryptophan + H2O. Its pathway is amino-acid biosynthesis; L-tryptophan biosynthesis; L-tryptophan from chorismate: step 5/5. In terms of biological role, the alpha subunit is responsible for the aldol cleavage of indoleglycerol phosphate to indole and glyceraldehyde 3-phosphate. The protein is Tryptophan synthase alpha chain of Streptococcus pneumoniae (strain P1031).